The primary structure comprises 355 residues: Protein RecA (355 aa).

72–79 is a binding site for ATP; it reads GPESSGKT.

This sequence belongs to the RecA family.

It is found in the cytoplasm. Can catalyze the hydrolysis of ATP in the presence of single-stranded DNA, the ATP-dependent uptake of single-stranded DNA by duplex DNA, and the ATP-dependent hybridization of homologous single-stranded DNAs. It interacts with LexA causing its activation and leading to its autocatalytic cleavage. The polypeptide is Protein RecA (Thermosynechococcus vestitus (strain NIES-2133 / IAM M-273 / BP-1)).